The following is a 279-amino-acid chain: Inorganic pyrophosphatase 2 (279 aa).

Aspartate 12 functions as the Nucleophile in the catalytic mechanism. 2 residues coordinate Mg(2+): aspartate 12 and aspartate 14. The Proton donor role is filled by aspartate 14. Positions 23 and 98 each coordinate substrate. Aspartate 182 lines the Mg(2+) pocket.

The protein belongs to the HAD-like hydrolase superfamily. In terms of assembly, tetramer. Mg(2+) serves as cofactor.

The enzyme catalyses diphosphate + H2O = 2 phosphate + H(+). In terms of biological role, catalyzes the specific cleavage of pyrophosphate. This Arabidopsis thaliana (Mouse-ear cress) protein is Inorganic pyrophosphatase 2.